Here is a 200-residue protein sequence, read N- to C-terminus: Lipopolysaccharide core heptose(II)-phosphate phosphatase (200 aa).

The first 25 residues, 1–25, serve as a signal peptide directing secretion; that stretch reads MLAFCRSSLKSKKYFIILLALAAIA.

The protein belongs to the phosphoglycerate mutase family. Ais subfamily.

Its subcellular location is the periplasm. Its pathway is bacterial outer membrane biogenesis; lipopolysaccharide metabolism. In terms of biological role, catalyzes the dephosphorylation of heptose(II) of the outer membrane lipopolysaccharide core. The protein is Lipopolysaccharide core heptose(II)-phosphate phosphatase of Escherichia coli O157:H7 (strain EC4115 / EHEC).